Reading from the N-terminus, the 691-residue chain is DNA ligase (691 aa).

NAD(+) contacts are provided by residues 41–45 (DAEYD), 90–91 (SL), and glutamate 130. The N6-AMP-lysine intermediate role is filled by lysine 132. Residues arginine 153, glutamate 190, lysine 307, and lysine 331 each coordinate NAD(+). Zn(2+) contacts are provided by cysteine 425, cysteine 428, cysteine 443, and cysteine 449. The region spanning 610 to 691 (APQGVLAGKT…MHTLLEGHAR (82 aa)) is the BRCT domain.

This sequence belongs to the NAD-dependent DNA ligase family. LigA subfamily. Requires Mg(2+) as cofactor. It depends on Mn(2+) as a cofactor.

It catalyses the reaction NAD(+) + (deoxyribonucleotide)n-3'-hydroxyl + 5'-phospho-(deoxyribonucleotide)m = (deoxyribonucleotide)n+m + AMP + beta-nicotinamide D-nucleotide.. Its function is as follows. DNA ligase that catalyzes the formation of phosphodiester linkages between 5'-phosphoryl and 3'-hydroxyl groups in double-stranded DNA using NAD as a coenzyme and as the energy source for the reaction. It is essential for DNA replication and repair of damaged DNA. In Burkholderia pseudomallei (strain 1106a), this protein is DNA ligase.